A 232-amino-acid polypeptide reads, in one-letter code: Vacuolar iron transporter homolog 1 (232 aa).

The Cytoplasmic segment spans residues 1-59; sequence MAIDLGCHVGCASPETKQEETADPTAAPVVVDDVEAAAGGRRPGDGGGVNYVARAQWLR. Residues 60 to 80 traverse the membrane as a helical segment; that stretch reads AAVLGANDGLVSVASLMVGVG. Topologically, residues 81 to 89 are vacuolar; sequence AANGTRRAM. The helical transmembrane segment at 90–110 threads the bilayer; the sequence is LVSGLAGLVAGACSMAIGEFV. Over 111 to 148 the chain is Cytoplasmic; it reads SVYAQCDIQAAQIERARGGKDADGGEEEEELPSPTMAA. Residues 149 to 169 traverse the membrane as a helical segment; sequence VASALSFAAGAALPLLAGGFV. Topologically, residues 170–175 are vacuolar; the sequence is RPWAAR. The helical transmembrane segment at 176–196 threads the bilayer; it reads VAAVCAASSLGLAGFGVASAY. Residues 197–208 lie on the Cytoplasmic side of the membrane; that stretch reads LGGAGVARSGVR. Residues 209–229 form a helical membrane-spanning segment; it reads MLVGGWLAMAVTYGVLKLFGM. Residues 230–232 lie on the Vacuolar side of the membrane; the sequence is HGV.

The protein belongs to the CCC1 family.

It localises to the vacuole membrane. The enzyme catalyses Fe(2+)(in) = Fe(2+)(out). Functionally, probable vacuolar iron transporter that may be involved in the regulation of iron distribution throughout the plant. The protein is Vacuolar iron transporter homolog 1 of Oryza sativa subsp. japonica (Rice).